The sequence spans 634 residues: DNA-directed RNA polymerase subunit gamma (634 aa).

Positions 74, 76, 89, and 92 each coordinate Zn(2+). The Mg(2+) site is built by Asp471, Asp473, and Asp475.

The protein belongs to the RNA polymerase beta' chain family. RpoC1 subfamily. In cyanobacteria the RNAP catalytic core is composed of 2 alpha, 1 beta, 1 beta', 1 gamma and 1 omega subunit. When a sigma factor is associated with the core the holoenzyme is formed, which can initiate transcription. The cofactor is Mg(2+). Zn(2+) is required as a cofactor.

The enzyme catalyses RNA(n) + a ribonucleoside 5'-triphosphate = RNA(n+1) + diphosphate. Its function is as follows. DNA-dependent RNA polymerase catalyzes the transcription of DNA into RNA using the four ribonucleoside triphosphates as substrates. The protein is DNA-directed RNA polymerase subunit gamma of Synechococcus sp. (strain CC9902).